Reading from the N-terminus, the 209-residue chain is Uracil phosphoribosyltransferase (209 aa).

Residues arginine 79, arginine 104, and 131 to 139 contribute to the 5-phospho-alpha-D-ribose 1-diphosphate site; that span reads DPMLATGNS. Uracil contacts are provided by residues isoleucine 194 and 199 to 201; that span reads GDA. Aspartate 200 is a binding site for 5-phospho-alpha-D-ribose 1-diphosphate.

It belongs to the UPRTase family. Mg(2+) serves as cofactor.

The enzyme catalyses UMP + diphosphate = 5-phospho-alpha-D-ribose 1-diphosphate + uracil. Its pathway is pyrimidine metabolism; UMP biosynthesis via salvage pathway; UMP from uracil: step 1/1. Its activity is regulated as follows. Allosterically activated by GTP. Functionally, catalyzes the conversion of uracil and 5-phospho-alpha-D-ribose 1-diphosphate (PRPP) to UMP and diphosphate. The protein is Uracil phosphoribosyltransferase of Sinorhizobium medicae (strain WSM419) (Ensifer medicae).